The primary structure comprises 384 residues: Polyketide synthase BAS (384 aa).

The Nucleophile and monoketide coumarate intermediate role is filled by cysteine 157. Cysteine 157 carries the post-translational modification S-(4-hydroxycinnamyl)cysteine.

This sequence belongs to the thiolase-like superfamily. Chalcone/stilbene synthases family. Homodimer.

The catalysed reaction is 4-coumaroyl-CoA + malonyl-CoA + H2O + H(+) = 4-hydroxybenzalacetone + 2 CO2 + 2 CoA. It participates in secondary metabolite biosynthesis; flavonoid biosynthesis. Functionally, polyketide synthase producing 4-hydroxybenzalacetone. Can use p-coumaryl-CoA as substrate but does not accept hexanoyl-CoA, isobutyryl-CoA, isovaleryl-CoA, and acetyl-CoA as a substrates. Catalyzes the initial key reaction step in the biosynthesis of phenylbutanoids. The sequence is that of Polyketide synthase BAS (BAS) from Rheum palmatum (Chinese rhubarb).